Consider the following 494-residue polypeptide: Ketol-acid reductoisomerase (NADP(+)) (494 aa).

Residues 14 to 208 (LDQIGRCRFM…GGDRAGVLES (195 aa)) enclose the KARI N-terminal Rossmann domain. Residues 45–48 (CGAQ), Arg-68, Arg-76, Ser-78, and 108–110 (DKQ) each bind NADP(+). The active site involves His-132. Gly-158 provides a ligand contact to NADP(+). 2 consecutive KARI C-terminal knotted domains span residues 209 to 344 (SFVA…NAPE) and 345 to 487 (YNGK…MTDM). Asp-217, Glu-221, Glu-389, and Glu-393 together coordinate Mg(2+). Ser-414 lines the substrate pocket.

This sequence belongs to the ketol-acid reductoisomerase family. It depends on Mg(2+) as a cofactor.

The catalysed reaction is (2R)-2,3-dihydroxy-3-methylbutanoate + NADP(+) = (2S)-2-acetolactate + NADPH + H(+). It catalyses the reaction (2R,3R)-2,3-dihydroxy-3-methylpentanoate + NADP(+) = (S)-2-ethyl-2-hydroxy-3-oxobutanoate + NADPH + H(+). The protein operates within amino-acid biosynthesis; L-isoleucine biosynthesis; L-isoleucine from 2-oxobutanoate: step 2/4. It participates in amino-acid biosynthesis; L-valine biosynthesis; L-valine from pyruvate: step 2/4. Functionally, involved in the biosynthesis of branched-chain amino acids (BCAA). Catalyzes an alkyl-migration followed by a ketol-acid reduction of (S)-2-acetolactate (S2AL) to yield (R)-2,3-dihydroxy-isovalerate. In the isomerase reaction, S2AL is rearranged via a Mg-dependent methyl migration to produce 3-hydroxy-3-methyl-2-ketobutyrate (HMKB). In the reductase reaction, this 2-ketoacid undergoes a metal-dependent reduction by NADPH to yield (R)-2,3-dihydroxy-isovalerate. The polypeptide is Ketol-acid reductoisomerase (NADP(+)) (Pseudoalteromonas atlantica (strain T6c / ATCC BAA-1087)).